Here is a 129-residue protein sequence, read N- to C-terminus: uncharacterized protein (129 aa).

Residues 46–66 (FFHFFFSFLLHLISPAVTGGI) traverse the membrane as a helical segment.

Its subcellular location is the membrane. This is an uncharacterized protein from Saccharomyces cerevisiae (strain ATCC 204508 / S288c) (Baker's yeast).